Here is a 254-residue protein sequence, read N- to C-terminus: Bowman-Birk type bran trypsin inhibitor (254 aa).

The N-terminal stretch at 1–22 is a signal peptide; the sequence is MSNTTMATSTILLFLLAGLAAA. Positions 23–118 are excised as a propeptide; the sequence is HGDGDTTIRL…KCTAALDGLS (96 aa). 3 consecutive repeats follow at residues 46–120, 121–187, and 188–251; these read KPWD…LSME, RPWK…LCTP, and RPWG…CKPR. 10 cysteine pairs are disulfide-bonded: Cys51–Cys248, Cys125–Cys185, Cys126–Cys143, Cys152–Cys159, Cys156–Cys172, Cys193–Cys248, Cys194–Cys209, Cys199–Cys207, Cys216–Cys223, and Cys220–Cys236. The propeptide occupies 252-254; the sequence is AEN.

The protein belongs to the Bowman-Birk serine protease inhibitor family. Expressed in roots, leaves and flowers.

In Oryza sativa subsp. indica (Rice), this protein is Bowman-Birk type bran trypsin inhibitor (RBBI3.3).